A 208-amino-acid chain; its full sequence is LexA repressor (208 aa).

The H-T-H motif DNA-binding region spans Val29–Asn49. Catalysis depends on for autocatalytic cleavage activity residues Ser129 and Lys167.

Belongs to the peptidase S24 family. Homodimer.

The enzyme catalyses Hydrolysis of Ala-|-Gly bond in repressor LexA.. Its function is as follows. Represses a number of genes involved in the response to DNA damage (SOS response), including recA and lexA. In the presence of single-stranded DNA, RecA interacts with LexA causing an autocatalytic cleavage which disrupts the DNA-binding part of LexA, leading to derepression of the SOS regulon and eventually DNA repair. In Limosilactobacillus fermentum (strain NBRC 3956 / LMG 18251) (Lactobacillus fermentum), this protein is LexA repressor.